The primary structure comprises 596 residues: Elongation factor 4 (596 aa).

One can recognise a tr-type G domain in the interval 2 to 184 (KHIRNFSIIA…VIVEQIPPPE (183 aa)). GTP-binding positions include 14-19 (DHGKST) and 131-134 (NKID).

It belongs to the TRAFAC class translation factor GTPase superfamily. Classic translation factor GTPase family. LepA subfamily.

The protein localises to the cell inner membrane. The catalysed reaction is GTP + H2O = GDP + phosphate + H(+). In terms of biological role, required for accurate and efficient protein synthesis under certain stress conditions. May act as a fidelity factor of the translation reaction, by catalyzing a one-codon backward translocation of tRNAs on improperly translocated ribosomes. Back-translocation proceeds from a post-translocation (POST) complex to a pre-translocation (PRE) complex, thus giving elongation factor G a second chance to translocate the tRNAs correctly. Binds to ribosomes in a GTP-dependent manner. The chain is Elongation factor 4 from Shewanella piezotolerans (strain WP3 / JCM 13877).